A 565-amino-acid polypeptide reads, in one-letter code: Glucose-6-phosphate isomerase (565 aa).

Glu-373 serves as the catalytic Proton donor. Active-site residues include His-404 and Lys-530.

This sequence belongs to the GPI family.

Its subcellular location is the cytoplasm. The catalysed reaction is alpha-D-glucose 6-phosphate = beta-D-fructose 6-phosphate. It functions in the pathway carbohydrate biosynthesis; gluconeogenesis. It participates in carbohydrate degradation; glycolysis; D-glyceraldehyde 3-phosphate and glycerone phosphate from D-glucose: step 2/4. In terms of biological role, catalyzes the reversible isomerization of glucose-6-phosphate to fructose-6-phosphate. In Corynebacterium jeikeium (strain K411), this protein is Glucose-6-phosphate isomerase.